A 450-amino-acid chain; its full sequence is Crh-like protein 4 (450 aa).

The signal sequence occupies residues 1–21; that stretch reads MRLSLVGVAIGLLSSSAIVTA. A disulfide bond links Cys-27 and Cys-34. Positions 46–228 constitute a GH16 domain; sequence YDFTKGSSPD…WAGGETDYSA (183 aa). The active-site Nucleophile is the Glu-119. Glu-123 acts as the Proton donor in catalysis. 4 residues coordinate chitin: Glu-123, Lys-201, Trp-205, and Thr-216. Asn-383 carries an N-linked (GlcNAc...) asparagine glycan.

It belongs to the glycosyl hydrolase 16 family. CRH1 subfamily. The GPI-like anchor contains a phosphoceramide lipid group. The anchor position has not been determined.

It localises to the cell membrane. It is found in the secreted. The protein localises to the cell wall. The enzyme catalyses Random endo-hydrolysis of N-acetyl-beta-D-glucosaminide (1-&gt;4)-beta-linkages in chitin and chitodextrins.. Functionally, dual chitinase/transglycosylase that plays a role in cell wall architecture. Chitinase and transglycosylase activities are coupled. Required for the polysaccharide cross-linking at the septa and the cell wall. More specifically, transfers chitin to 1,6-beta-glucan in the cell wall. The sequence is that of Crh-like protein 4 from Aspergillus fumigatus (strain ATCC MYA-4609 / CBS 101355 / FGSC A1100 / Af293) (Neosartorya fumigata).